The primary structure comprises 277 residues: uncharacterized protein (277 aa).

The tract at residues 232 to 262 (NNESAICESQASSKEDERSDKTTSSSKKKSF) is disordered. Polar residues predominate over residues 234–243 (ESAICESQAS).

It is found in the cytoplasm. The protein localises to the nucleus. This is an uncharacterized protein from Schizosaccharomyces pombe (strain 972 / ATCC 24843) (Fission yeast).